Consider the following 219-residue polypeptide: Proteasome subunit beta type-9 (219 aa).

A propeptide spans 1-20 (MLRAGAPTAGSFRTEEVHTG) (removed in mature form). Thr21 (nucleophile) is an active-site residue. An N6-acetyllysine mark is found at Lys53 and Lys109.

This sequence belongs to the peptidase T1B family. In terms of assembly, the 26S proteasome consists of a 20S proteasome core and two 19S regulatory subunits. The 20S proteasome core is composed of 28 subunits that are arranged in four stacked rings, resulting in a barrel-shaped structure. The two end rings are each formed by seven alpha subunits, and the two central rings are each formed by seven beta subunits. The catalytic chamber with the active sites is on the inside of the barrel. Component of the immunoproteasome, where it displaces the equivalent housekeeping subunit PSMB6. Component of the spermatoproteasome, a form of the proteasome specifically found in testis. Autocleaved. The resulting N-terminal Thr residue of the mature subunit is responsible for the nucleophile proteolytic activity.

The protein resides in the cytoplasm. It localises to the nucleus. The enzyme catalyses Cleavage of peptide bonds with very broad specificity.. Its function is as follows. The proteasome is a multicatalytic proteinase complex which is characterized by its ability to cleave peptides with Arg, Phe, Tyr, Leu, and Glu adjacent to the leaving group at neutral or slightly basic pH. The proteasome has an ATP-dependent proteolytic activity. This subunit is involved in antigen processing to generate class I binding peptides. This is Proteasome subunit beta type-9 (Psmb9) from Mus musculus bactrianus (Southwestern Asian house mouse).